Reading from the N-terminus, the 92-residue chain is Large ribosomal subunit protein eL43 (92 aa).

The C4-type zinc-finger motif lies at 39 to 60 (CSFCGKDSMKRAVVGIWSCKRC).

The protein belongs to the eukaryotic ribosomal protein eL43 family.

The polypeptide is Large ribosomal subunit protein eL43 (RpL37A) (Drosophila melanogaster (Fruit fly)).